A 140-amino-acid chain; its full sequence is Austinoid biosynthesis clusters protein S (140 aa).

This sequence belongs to the trt14 isomerase family. Homodimer.

It participates in secondary metabolite biosynthesis; terpenoid biosynthesis. Functionally, part of the gene cluster B that mediates the biosynthesis of austinol and dehydroaustinol, two fungal meroterpenoids. The first step of the pathway is the synthesis of 3,5-dimethylorsellinic acid by the polyketide synthase ausA. 3,5-dimethylorsellinic acid is then prenylated by the polyprenyl transferase ausN. Further epoxidation by the FAD-dependent monooxygenase ausM and cyclization by the probable terpene cyclase ausL lead to the formation of protoaustinoid A. Protoaustinoid A is then oxidized to spiro-lactone preaustinoid A3 by the combined action of the FAD-binding monooxygenases ausB and ausC, and the dioxygenase ausE. Acid-catalyzed keto-rearrangement and ring contraction of the tetraketide portion of preaustinoid A3 by ausJ lead to the formation of preaustinoid A4. The aldo-keto reductase ausK, with the help of ausH, is involved in the next step by transforming preaustinoid A4 into isoaustinone which is in turn hydroxylated by the P450 monooxygenase ausI to form austinolide. Finally, the cytochrome P450 monooxygenase ausG modifies austinolide to austinol. Austinol can be further modified to dehydroaustinol which forms a diffusible complex with diorcinol that initiates conidiation. Due to genetic rearrangements of the clusters and the subsequent loss of some enzymes, the end products of the Emericella nidulans austinoid biosynthesis clusters are austinol and dehydroaustinol, even if additional enzymes, such as the O-acetyltransferase ausQ and the cytochrome P450 monooxygenase ausR are still functional. AusS is necessary for austinoids production and may play a possible function as a regulator. This is Austinoid biosynthesis clusters protein S from Emericella nidulans (strain FGSC A4 / ATCC 38163 / CBS 112.46 / NRRL 194 / M139) (Aspergillus nidulans).